Reading from the N-terminus, the 146-residue chain is D-aminoacyl-tRNA deacylase (146 aa).

The Gly-cisPro motif, important for rejection of L-amino acids motif lies at Gly138–Pro139.

This sequence belongs to the DTD family. As to quaternary structure, homodimer.

It localises to the cytoplasm. The enzyme catalyses glycyl-tRNA(Ala) + H2O = tRNA(Ala) + glycine + H(+). It catalyses the reaction a D-aminoacyl-tRNA + H2O = a tRNA + a D-alpha-amino acid + H(+). An aminoacyl-tRNA editing enzyme that deacylates mischarged D-aminoacyl-tRNAs. Also deacylates mischarged glycyl-tRNA(Ala), protecting cells against glycine mischarging by AlaRS. Acts via tRNA-based rather than protein-based catalysis; rejects L-amino acids rather than detecting D-amino acids in the active site. By recycling D-aminoacyl-tRNA to D-amino acids and free tRNA molecules, this enzyme counteracts the toxicity associated with the formation of D-aminoacyl-tRNA entities in vivo and helps enforce protein L-homochirality. In Stenotrophomonas maltophilia (strain R551-3), this protein is D-aminoacyl-tRNA deacylase.